Consider the following 323-residue polypeptide: Dolichyl-phosphate beta-glucosyltransferase ALG5A (323 aa).

At 1 to 5 (MKFWR) the chain is on the lumenal side. Residues 6–26 (FVQILFFLGVAAVGLVVAVMI) form a helical membrane-spanning segment. The Cytoplasmic portion of the chain corresponds to 27 to 323 (ANADDTTLFD…GAWKIRDRRH (297 aa)).

This sequence belongs to the glycosyltransferase 2 family.

Its subcellular location is the endoplasmic reticulum membrane. The enzyme catalyses a di-trans,poly-cis-dolichyl phosphate + UDP-alpha-D-glucose = a di-trans,poly-cis-dolichyl beta-D-glucosyl phosphate + UDP. It functions in the pathway protein modification; protein glycosylation. Functionally, dolichyl-phosphate beta-glucosyltransferase involved in the glycosylation of glycoproteins through the synthesis of dolichyl beta-D-glucosyl phosphate which serves as a sugar donor for transfer of three glucose residues to the Man-9-GlcNAc-2-PP-dolichol precursor to N-glycans. The sequence is that of Dolichyl-phosphate beta-glucosyltransferase ALG5A from Trichomonas vaginalis (strain ATCC PRA-98 / G3).